Here is a 942-residue protein sequence, read N- to C-terminus: ETEITPYGENEELLWRHRITTEVGDCGATMVALSDQKIVGFHSLGGISMNYFVPVTQELLDFLNSKTEKPLVPWRFSEDQVDVGGLYIHNDFDKFPFVKTIQKLVGFQNGHMIKYCGEGFTPVARSENRLSRQHVISGQRESFIHFVEASAKWRPIVTPMLGRLQPSALNREAYYKDVLKYDKPIRLGTVHEEAFQSAVINVIRILENAGFERGGVKACFDYGKIFNDLNLDAAMGALYAGKKKDYFVEATDEEIEEMFLRSAGKICANGHGVWSALLKAELRPAEKVAANKTRTFTSAPIDILFGAKAVVDDFNKQFYKRHLLGPWTVGINKFNKGWDLLARSLMRYEWFIDADGSQFDSSITPLLMNAVLTIRLYFMERDDITELMLRNLYTQIISTCMLAEDGLIVQKHRGNNSGQPSTVVDNTLCLMIAMEYARQRAISDGHLNMQMRYVCNGDDLLINANEEAKEVVQNKYEQYIKELELNYCFDDAFQSIEGVEFMSHKFMLRNGIYIPKLARHRIVAILEWQRSAEPQAIKSAILAACVEAFGYDDSTELIREYAISLEPVWGSFLPTDGEIEQLYLEGIAKQEVARCLAGVDDVCKFESAAPGTNEAVDEMLKAAGDDEALARANATSTSDTIPPARNVGADTTTPAKANPPSGRRPSSRSLIDNSIGGNGVQDVADRTSGIVFPVPTRKSTSLYLTPKVKLRATTEELRKYESTSLNPQQIDLRYSTQQELNDWIKASADGLGQTEEAFIDNILPGWIVHCIVNTTSSENRKAGSWRCVTNAGTADEEQVLYDIEPMYSAANPTMRAIMRHFSDLAGLVIAESFKQGRPLIPKGYIKAGVLDASSAARACDFVVRDRHDTATFVQVQNQVLVNRVSGITNWLFAQQCLALVLTRTWRAMTLRCRRGHPQPRLSASFLEVSTSCRARRRLGVQR.

Residues 1 to 90 (ETEITPYGEN…VDVGGLYIHN (90 aa)) form the Peptidase C4 domain. The active-site For nuclear inclusion protein A activity is the cysteine 26. The RdRp catalytic domain occupies 349-472 (EWFIDADGSQ…NANEEAKEVV (124 aa)). A disordered region spans residues 633–678 (NATSTSDTIPPARNVGADTTTPAKANPPSGRRPSSRSLIDNSIGGN). Residues 659–669 (PPSGRRPSSRS) are compositionally biased toward low complexity.

This sequence belongs to the potyviridae genome polyprotein family. Post-translationally, genome polyprotein of potyviruses undergoes post-translational proteolytic processing by the main proteinase NIa-pro resulting in the production of at least ten individual proteins. The P1 proteinase and the HC-pro cleave only their respective C-termini autocatalytically. 6K1 is essential for proper proteolytic separation of P3 from CI.

The protein resides in the virion. It carries out the reaction RNA(n) + a ribonucleoside 5'-triphosphate = RNA(n+1) + diphosphate. The catalysed reaction is Hydrolyzes glutaminyl bonds, and activity is further restricted by preferences for the amino acids in P6 - P1' that vary with the species of potyvirus, e.g. Glu-Xaa-Xaa-Tyr-Xaa-Gln-|-(Ser or Gly) for the enzyme from tobacco etch virus. The natural substrate is the viral polyprotein, but other proteins and oligopeptides containing the appropriate consensus sequence are also cleaved.. Functionally, has RNA-binding and proteolytic activities. Its function is as follows. An RNA-dependent RNA polymerase that plays an essential role in the virus replication. Involved in aphid transmission, cell-to-cell and systemis movement, encapsidation of the viral RNA and in the regulation of viral RNA amplification. The chain is Genome polyprotein from Brome streak virus (strain German) (BStV).